The chain runs to 229 residues: Thylakoid lumenal 19 kDa protein, chloroplastic (229 aa).

Its subcellular location is the plastid. It is found in the chloroplast thylakoid lumen. This Arabidopsis thaliana (Mouse-ear cress) protein is Thylakoid lumenal 19 kDa protein, chloroplastic.